The chain runs to 490 residues: Cytochrome P450 2C20 (490 aa).

Position 435 (C435) interacts with heme.

Belongs to the cytochrome P450 family. It depends on heme as a cofactor.

The protein localises to the endoplasmic reticulum membrane. It localises to the microsome membrane. It catalyses the reaction an organic molecule + reduced [NADPH--hemoprotein reductase] + O2 = an alcohol + oxidized [NADPH--hemoprotein reductase] + H2O + H(+). Its function is as follows. Cytochromes P450 are a group of heme-thiolate monooxygenases. In liver microsomes, this enzyme is involved in an NADPH-dependent electron transport pathway. It oxidizes a variety of structurally unrelated compounds, including steroids, fatty acids, and xenobiotics. The chain is Cytochrome P450 2C20 (CYP2C20) from Macaca fascicularis (Crab-eating macaque).